Reading from the N-terminus, the 323-residue chain is MSLQSQVSGRLAQLRAAGQLLVSLRPWPGRSAGGPRPRGSACGPLVALGEHGYCAWLSAGVGAWGAAGRGAWVRTWAPLAMAAKVDLSTSTDWKEAKSFLKGLSDKQREEHYFCKDFIKLKKIPTWKETAKGLAVKVEDPKYKKDKQLNEKISLYRGDITKLEVDAIVNAANSSLLGGGGVDGCIHRAAGSLLTDECRTLQNCETGKAKITCGYRLPAKYVIHTVGPIAVGQPTASQAAELRSCYLSSLDLLLEHRLRSVAFPCISTGVFGYPNEEAAEVVLASLREWLEQHKDKVDRLIICVFLEKDEGIYRERLPHYFPVA.

An N6-succinyllysine mark is found at Lys-94, Lys-101, and Lys-127. A Glycyl lysine isopeptide (Lys-Gly) (interchain with G-Cter in SUMO2) cross-link involves residue Lys-136. Residues 139–320 (DPKYKKDKQL…IYRERLPHYF (182 aa)) enclose the Macro domain. Residue 157–159 (GDI) participates in substrate binding. Lys-161 is subject to N6-acetyllysine. Residues 170–172 (AAN), 177–182 (GGGGVD), 265–271 (ISTGVFG), and Phe-304 each bind substrate.

It belongs to the MacroD-type family. MacroD1/2-like subfamily. As to quaternary structure, interacts with ESR1; Interacts in a manner that is estrogen independent but is enhanced by estrogen. Interacts (via macro domain) with AR.

The protein localises to the nucleus. It carries out the reaction 3''-O-acetyl-ADP-D-ribose + H2O = ADP-D-ribose + acetate + H(+). It catalyses the reaction 2''-O-acetyl-ADP-D-ribose + H2O = ADP-D-ribose + acetate + H(+). The enzyme catalyses 4-O-(ADP-D-ribosyl)-L-aspartyl-[protein] + H2O = L-aspartyl-[protein] + ADP-D-ribose + H(+). The catalysed reaction is 5-O-(ADP-D-ribosyl)-L-glutamyl-[protein] + H2O = L-glutamyl-[protein] + ADP-D-ribose + H(+). It carries out the reaction alpha-NAD(+) + H2O = ADP-D-ribose + nicotinamide + H(+). Subject to competitive inhibition by the product ADP-ribose. Functionally, removes ADP-ribose from aspartate and glutamate residues in proteins bearing a single ADP-ribose moiety. Inactive towards proteins bearing poly-ADP-ribose. Deacetylates O-acetyl-ADP ribose, a signaling molecule generated by the deacetylation of acetylated lysine residues in histones and other proteins. Plays a role in estrogen signaling. Binds to androgen receptor (AR) and amplifies the transactivation function of AR in response to androgen. May play an important role in carcinogenesis and/or progression of hormone-dependent cancers by feed-forward mechanism that activates ESR1 transactivation. Could be an ESR1 coactivator, providing a positive feedback regulatory loop for ESR1 signal transduction. Could be involved in invasive growth by down-regulating CDH1 in endometrial cancer cells. Enhances ESR1-mediated transcription activity. The protein is ADP-ribose glycohydrolase MACROD1 of Mus musculus (Mouse).